We begin with the raw amino-acid sequence, 124 residues long: MMKINNLPRLIRAFLPATLLMLPLVWQTPALAQSASCTQGSTCVSVGGNNDPMSKEQARQSQQQWDETNRLRNKMNNRVEKDFDKNDRAVDAKDNCERSDNLNAYWEPNTQRCLDRLSGRKINP.

The N-terminal stretch at 1–32 is a signal peptide; sequence MMKINNLPRLIRAFLPATLLMLPLVWQTPALA. Residues 47 to 69 form a disordered region; it reads GGNNDPMSKEQARQSQQQWDETN.

This sequence belongs to the UPF0482 family.

This chain is UPF0482 protein YPK_1977, found in Yersinia pseudotuberculosis serotype O:3 (strain YPIII).